Reading from the N-terminus, the 46-residue chain is Succinate dehydrogenase subunit 8, mitochondrial (46 aa).

As to quaternary structure, component of complex II composed of eight subunits in plants: four classical SDH subunits SDH1, SDH2, SDH3 and SDH4 (a flavoprotein (FP), an iron-sulfur protein (IP), and a cytochrome b composed of a large and a small subunit.), as well as four subunits unknown in mitochondria from bacteria and heterotrophic eukaryotes.

It is found in the mitochondrion inner membrane. It participates in carbohydrate metabolism; tricarboxylic acid cycle. This chain is Succinate dehydrogenase subunit 8, mitochondrial, found in Arabidopsis thaliana (Mouse-ear cress).